The sequence spans 273 residues: Shikimate dehydrogenase (NADP(+)) (273 aa).

Residues 18–20 (SKS) and T65 contribute to the shikimate site. Catalysis depends on K69, which acts as the Proton acceptor. NADP(+) is bound at residue E81. Shikimate contacts are provided by N90 and D105. Residues 130–134 (GAGGA), 154–159 (NRTHSK), and M217 each bind NADP(+). Y219 serves as a coordination point for shikimate. NADP(+) is bound at residue G240.

The protein belongs to the shikimate dehydrogenase family. In terms of assembly, homodimer.

It catalyses the reaction shikimate + NADP(+) = 3-dehydroshikimate + NADPH + H(+). It participates in metabolic intermediate biosynthesis; chorismate biosynthesis; chorismate from D-erythrose 4-phosphate and phosphoenolpyruvate: step 4/7. Involved in the biosynthesis of the chorismate, which leads to the biosynthesis of aromatic amino acids. Catalyzes the reversible NADPH linked reduction of 3-dehydroshikimate (DHSA) to yield shikimate (SA). This Janthinobacterium sp. (strain Marseille) (Minibacterium massiliensis) protein is Shikimate dehydrogenase (NADP(+)).